The chain runs to 191 residues: Orotate phosphoribosyltransferase (191 aa).

Glutamate 114 to serine 122 lines the 5-phospho-alpha-D-ribose 1-diphosphate pocket. Residues threonine 118 and arginine 146 each coordinate orotate.

Belongs to the purine/pyrimidine phosphoribosyltransferase family. PyrE subfamily. In terms of assembly, homodimer. It depends on Mg(2+) as a cofactor.

The catalysed reaction is orotidine 5'-phosphate + diphosphate = orotate + 5-phospho-alpha-D-ribose 1-diphosphate. Its pathway is pyrimidine metabolism; UMP biosynthesis via de novo pathway; UMP from orotate: step 1/2. Catalyzes the transfer of a ribosyl phosphate group from 5-phosphoribose 1-diphosphate to orotate, leading to the formation of orotidine monophosphate (OMP). The chain is Orotate phosphoribosyltransferase from Caldicellulosiruptor saccharolyticus (strain ATCC 43494 / DSM 8903 / Tp8T 6331).